The primary structure comprises 553 residues: MGKQVYLHIFNAKILDVFNQRFEDTELWIDNGSIYFRGKSKDLTAKNNFNAEGNYIVPGLIDAHLHIESSLLAPSELAKLELRHGVTSIFADPHEIGSVSGVSGLFYMIQEARNTPLHIHYMLPSSVPATNFEHAGAVLHADALKPFYGFPEINGLAEVMDFPAVANGDPDMLEKIRDAQAAGHHADGHGAGLTREQLAVYRAVGIDTDHESTSGKEALERIQAGMKVFIREGTVERDEKSILPVVRKNNQSYFSFCTDDKSAIDIQKEGSVDNNVRLAISKGIPAERAFTMASYNAAVAQHVKNVGALTDGFIADLVIISNLDNFVTEKVMTEGNWVDKLESKVTTFTSPAVNAELSLNDLKLPLKSDKAHVINIQPEHITTKHTIESVNRDQQGNFVADQDYAKIIVAERYHNLGHGLGIIHGFNMQEGAIGSTIAHDSHNMIIAGVDDKPMIIAYDRLKRMGGGMILVDKNGFTRELPLEIAGLMSDKPYQEVIAKQKSLKGAFAKISKGIDFDPFLTLSFMALPVIPSLKITDQGLFDFDQFKFIDINA.

Belongs to the metallo-dependent hydrolases superfamily. Adenine deaminase family. The cofactor is Mn(2+).

It catalyses the reaction adenine + H2O + H(+) = hypoxanthine + NH4(+). This is Adenine deaminase 1 from Oenococcus oeni (strain ATCC BAA-331 / PSU-1).